A 1033-amino-acid chain; its full sequence is DNA polymerase I A, chloroplastic (1033 aa).

The segment covering 1–11 has biased composition (pro residues); it reads MAVAPPLPPAP. Disordered regions lie at residues 1–32 and 104–142; these read MAVA…LSSP and TNGT…PSNS. The N-terminal 55 residues, 1–55, are a transit peptide targeting the chloroplast; the sequence is MAVAPPLPPAPARQLRRWKGSSPRPPPWLSSPFRRTRYLSRPAFAAGGRQDYSPS. Residues 115 to 124 show a composition bias toward basic and acidic residues; it reads LRHDPSEDIR. The segment covering 125–142 has biased composition (polar residues); sequence SSNYPSLYNQRERGPSNS. The 3'-5' exonuclease domain maps to 321–482; it reads FGNGKTCIWV…LYESLKNKLE (162 aa). Residues 696-1030 are polymerase; sequence CHAIAALCEV…VDAKYAKSWY (335 aa).

It belongs to the DNA polymerase type-A family. As to expression, expressed in shoot apical meristem, root apical meristem, leaf primordia and the marginal meristem.

The protein resides in the plastid. It localises to the chloroplast. It catalyses the reaction DNA(n) + a 2'-deoxyribonucleoside 5'-triphosphate = DNA(n+1) + diphosphate. Its activity is regulated as follows. Inhibited by dideoxythymidine-triphosphate (ddTTP), but not by aphidicolin and N-ethylmaleimide. In terms of biological role, in addition to polymerase activity, this DNA polymerase exhibits 5'-3' exonuclease activity. May be required for DNA replication and accumulation in plastids. This Oryza sativa subsp. japonica (Rice) protein is DNA polymerase I A, chloroplastic.